The following is a 209-amino-acid chain: Uracil phosphoribosyltransferase (209 aa).

5-phospho-alpha-D-ribose 1-diphosphate is bound by residues Arg-79, Arg-104, and 131 to 139 (DPMLATGGS). Residues Ile-194 and 199–201 (GDA) each bind uracil. Residue Asp-200 coordinates 5-phospho-alpha-D-ribose 1-diphosphate.

Belongs to the UPRTase family. It depends on Mg(2+) as a cofactor.

The enzyme catalyses UMP + diphosphate = 5-phospho-alpha-D-ribose 1-diphosphate + uracil. The protein operates within pyrimidine metabolism; UMP biosynthesis via salvage pathway; UMP from uracil: step 1/1. Allosterically activated by GTP. In terms of biological role, catalyzes the conversion of uracil and 5-phospho-alpha-D-ribose 1-diphosphate (PRPP) to UMP and diphosphate. The polypeptide is Uracil phosphoribosyltransferase (Streptococcus pneumoniae serotype 4 (strain ATCC BAA-334 / TIGR4)).